The following is a 360-amino-acid chain: Histidinol-phosphate aminotransferase (360 aa).

N6-(pyridoxal phosphate)lysine is present on lysine 222.

Belongs to the class-II pyridoxal-phosphate-dependent aminotransferase family. Histidinol-phosphate aminotransferase subfamily. Homodimer. Pyridoxal 5'-phosphate serves as cofactor.

It catalyses the reaction L-histidinol phosphate + 2-oxoglutarate = 3-(imidazol-4-yl)-2-oxopropyl phosphate + L-glutamate. It functions in the pathway amino-acid biosynthesis; L-histidine biosynthesis; L-histidine from 5-phospho-alpha-D-ribose 1-diphosphate: step 7/9. This is Histidinol-phosphate aminotransferase from Listeria innocua serovar 6a (strain ATCC BAA-680 / CLIP 11262).